The following is a 232-amino-acid chain: Large ribosomal subunit protein uL1 (232 aa).

The protein belongs to the universal ribosomal protein uL1 family. As to quaternary structure, part of the 50S ribosomal subunit.

Functionally, binds directly to 23S rRNA. The L1 stalk is quite mobile in the ribosome, and is involved in E site tRNA release. Protein L1 is also a translational repressor protein, it controls the translation of the L11 operon by binding to its mRNA. This Chlamydia pneumoniae (Chlamydophila pneumoniae) protein is Large ribosomal subunit protein uL1.